A 230-amino-acid polypeptide reads, in one-letter code: MDPDAVKSTLSNLAFGNVMAAAARNYQKEVLANEKAQGSNPVNEEVDLDELMDDPELERLHADRIAALKREVEKRESFKRQGHGEYREVSEGDFLGEVTRSEKVICHFYHKEFYRCKIMDKHLKTLAPRHVDTKFIKVDAENAPFFVTKLAIKTLPCVVLFSKGVAMDRLVGFQDLGTKDDFTTNKLENVLLKKGMLSKKKKEEDDEDAEYQESIRRSVRSSENLDSDSD.

The region spanning 89–173 (VSEGDFLGEV…GVAMDRLVGF (85 aa)) is the Thioredoxin domain. Residues 197–230 (LSKKKKEEDDEDAEYQESIRRSVRSSENLDSDSD) form a disordered region.

It belongs to the phosducin family. Interacts with TUBB2, TUBB3, TUBB4 and TUBB5. As to expression, expressed in embryos, shoot meristems, leaf primordia, root meristems, floral meristems and young floral buds.

It is found in the cytoplasm. The protein resides in the nucleus. Its function is as follows. Tubulin-binding protein involved in microtubule formation. The polypeptide is Thioredoxin domain-containing protein PLP3A (PLP3A) (Arabidopsis thaliana (Mouse-ear cress)).